Consider the following 631-residue polypeptide: tRNA uridine 5-carboxymethylaminomethyl modification enzyme MnmG (631 aa).

FAD contacts are provided by residues 15 to 20 (GAGHAG), Ile127, and Ser182. 276 to 290 (GPRYCPSIEDKIVRF) serves as a coordination point for NAD(+). Position 373 (Gln373) interacts with FAD.

The protein belongs to the MnmG family. Homodimer. Heterotetramer of two MnmE and two MnmG subunits. FAD is required as a cofactor.

The protein resides in the cytoplasm. Its function is as follows. NAD-binding protein involved in the addition of a carboxymethylaminomethyl (cmnm) group at the wobble position (U34) of certain tRNAs, forming tRNA-cmnm(5)s(2)U34. The protein is tRNA uridine 5-carboxymethylaminomethyl modification enzyme MnmG of Streptococcus mutans serotype c (strain ATCC 700610 / UA159).